A 147-amino-acid chain; its full sequence is Hemoglobin subunit beta (147 aa).

One can recognise a Globin domain in the interval 2-147 (HWEDAEKQYI…ISHSLGREYH (146 aa)). His63 and His92 together coordinate heme b.

Belongs to the globin family. In terms of assembly, heterotetramer of two alpha chains and two beta chains. Red blood cells.

Involved in oxygen transport from the lung to the various peripheral tissues. The chain is Hemoglobin subunit beta (HBB) from Lepidosiren paradoxus (South American lungfish).